The following is a 305-amino-acid chain: UDP-3-O-acyl-N-acetylglucosamine deacetylase (305 aa).

The Zn(2+) site is built by His-78, His-237, and Asp-241. Catalysis depends on His-264, which acts as the Proton donor.

The protein belongs to the LpxC family. It depends on Zn(2+) as a cofactor.

It carries out the reaction a UDP-3-O-[(3R)-3-hydroxyacyl]-N-acetyl-alpha-D-glucosamine + H2O = a UDP-3-O-[(3R)-3-hydroxyacyl]-alpha-D-glucosamine + acetate. The protein operates within glycolipid biosynthesis; lipid IV(A) biosynthesis; lipid IV(A) from (3R)-3-hydroxytetradecanoyl-[acyl-carrier-protein] and UDP-N-acetyl-alpha-D-glucosamine: step 2/6. Catalyzes the hydrolysis of UDP-3-O-myristoyl-N-acetylglucosamine to form UDP-3-O-myristoylglucosamine and acetate, the committed step in lipid A biosynthesis. The sequence is that of UDP-3-O-acyl-N-acetylglucosamine deacetylase from Dechloromonas aromatica (strain RCB).